We begin with the raw amino-acid sequence, 528 residues long: Protein phosphatase 1 regulatory subunit 16A (528 aa).

Residues 18-45 (STQERLKHAQKRRAQQVKMWAQAEKEAQ) adopt a coiled-coil conformation. The tract at residues 19–59 (TQERLKHAQKRRAQQVKMWAQAEKEAQGKKGPGERPRKEAA) is disordered. Over residues 40–58 (AEKEAQGKKGPGERPRKEA) the composition is skewed to basic and acidic residues. ANK repeat units follow at residues 70-99 (PPSV…SPDL), 103-132 (DGLT…NINA), 136-165 (ECWT…NLLA), 231-260 (HGAT…SLSA), and 264-293 (DGWE…DLNA). Disordered regions lie at residues 330 to 351 (RQRS…VVRR) and 367 to 421 (QEAI…SPVR). Ser-433 bears the Phosphoserine mark. The segment at 462–505 (QRAAAKLQRPPPEGPESPETAEPGLPGDTVTPQPDCGFRAGGDP) is disordered. A lipid anchor (S-palmitoyl cysteine) is attached at Cys-524. A Cysteine methyl ester modification is found at Cys-525. A lipid anchor (S-farnesyl cysteine) is attached at Cys-525. Positions 526 to 528 (LLM) are cleaved as a propeptide — removed in mature form.

In terms of assembly, binds PP1.

Its subcellular location is the cell membrane. Functionally, inhibits protein phosphatase 1 activity toward phosphorylase, myosin light chain and myosin substrates. This is Protein phosphatase 1 regulatory subunit 16A (PPP1R16A) from Homo sapiens (Human).